Consider the following 795-residue polypeptide: Lon protease (795 aa).

The Lon N-terminal domain occupies 7–213; the sequence is SQILVVRGQV…KIIQAGIEDL (207 aa). 379–386 serves as a coordination point for ATP; the sequence is GPPGVGKS. The 181-residue stretch at 615–795 folds into the Lon proteolytic domain; sequence VSLPGIVNGM…YSDIYNKLFS (181 aa). Catalysis depends on residues serine 702 and lysine 745.

This sequence belongs to the peptidase S16 family. As to quaternary structure, homohexamer. Organized in a ring with a central cavity.

The protein resides in the cytoplasm. The catalysed reaction is Hydrolysis of proteins in presence of ATP.. ATP-dependent serine protease that mediates the selective degradation of mutant and abnormal proteins as well as certain short-lived regulatory proteins. Required for cellular homeostasis and for survival from DNA damage and developmental changes induced by stress. Degrades polypeptides processively to yield small peptide fragments that are 5 to 10 amino acids long. Binds to DNA in a double-stranded, site-specific manner. The sequence is that of Lon protease from Mycoplasma genitalium (strain ATCC 33530 / DSM 19775 / NCTC 10195 / G37) (Mycoplasmoides genitalium).